Reading from the N-terminus, the 598-residue chain is Probable translation initiation factor IF-2 (598 aa).

Positions 3-225 constitute a tr-type G domain; sequence LRCPIVSVLG…GLAQKFLEQK (223 aa). Residues 12 to 19 form a G1 region; sequence GHVDHGKT. 12 to 19 serves as a coordination point for GTP; sequence GHVDHGKT. The G2 stretch occupies residues 37–41; that stretch reads GITQH. Positions 76–79 are G3; that stretch reads DTPG. GTP is bound by residues 76 to 80 and 130 to 133; these read DTPGH and NKLD. The interval 130 to 133 is G4; the sequence is NKLD. Positions 200–202 are G5; that stretch reads SAI.

It belongs to the TRAFAC class translation factor GTPase superfamily. Classic translation factor GTPase family. IF-2 subfamily.

In terms of biological role, function in general translation initiation by promoting the binding of the formylmethionine-tRNA to ribosomes. Seems to function along with eIF-2. The sequence is that of Probable translation initiation factor IF-2 from Methanococcus vannielii (strain ATCC 35089 / DSM 1224 / JCM 13029 / OCM 148 / SB).